Consider the following 247-residue polypeptide: ATP synthase subunit a, chloroplastic (247 aa).

The next 5 membrane-spanning stretches (helical) occupy residues 38-58 (QVLI…ILVV), 95-115 (VPFI…GALL), 134-154 (INTT…AGIS), 199-219 (LVVV…VMFL), and 220-240 (GLFT…AYIG).

It belongs to the ATPase A chain family. F-type ATPases have 2 components, CF(1) - the catalytic core - and CF(0) - the membrane proton channel. CF(1) has five subunits: alpha(3), beta(3), gamma(1), delta(1), epsilon(1). CF(0) has four main subunits: a, b, b' and c.

Its subcellular location is the plastid. The protein localises to the chloroplast thylakoid membrane. Key component of the proton channel; it plays a direct role in the translocation of protons across the membrane. The sequence is that of ATP synthase subunit a, chloroplastic from Lotus japonicus (Lotus corniculatus var. japonicus).